A 229-amino-acid chain; its full sequence is Leucyl/phenylalanyl-tRNA--protein transferase (229 aa).

It belongs to the L/F-transferase family.

It localises to the cytoplasm. It carries out the reaction N-terminal L-lysyl-[protein] + L-leucyl-tRNA(Leu) = N-terminal L-leucyl-L-lysyl-[protein] + tRNA(Leu) + H(+). The enzyme catalyses N-terminal L-arginyl-[protein] + L-leucyl-tRNA(Leu) = N-terminal L-leucyl-L-arginyl-[protein] + tRNA(Leu) + H(+). It catalyses the reaction L-phenylalanyl-tRNA(Phe) + an N-terminal L-alpha-aminoacyl-[protein] = an N-terminal L-phenylalanyl-L-alpha-aminoacyl-[protein] + tRNA(Phe). Functionally, functions in the N-end rule pathway of protein degradation where it conjugates Leu, Phe and, less efficiently, Met from aminoacyl-tRNAs to the N-termini of proteins containing an N-terminal arginine or lysine. The chain is Leucyl/phenylalanyl-tRNA--protein transferase from Pseudomonas syringae pv. tomato (strain ATCC BAA-871 / DC3000).